The chain runs to 324 residues: Transcriptional regulator protein Pur-beta (324 aa).

A disordered region spans residues 1–47 (MADGDSGSERGGGGGGGGGPGGFQPAPRGGGGGGGGPGGEQETQELA). N-acetylalanine is present on Ala-2. 2 positions are modified to phosphoserine: Ser-6 and Ser-8. Gly residues predominate over residues 9–39 (ERGGGGGGGGGPGGFQPAPRGGGGGGGGPGG). Position 28 is an omega-N-methylarginine (Arg-28). Residues 37–263 (PGGEQETQEL…GVFLRVSEVK (227 aa)) form a DNA-binding region. Residue Thr-43 is modified to Phosphothreonine. Ser-113 bears the Phosphoserine mark. Arg-164 bears the Omega-N-methylarginine mark. Lys-279 bears the N6-acetyllysine mark. Basic and acidic residues predominate over residues 297–307 (RQRDKLYERRG). A disordered region spans residues 297-324 (RQRDKLYERRGGGSGGGDESEGEEVDED). Arg-306 carries the omega-N-methylarginine modification. Residues Ser-310 and Ser-316 each carry the phosphoserine modification. Residues 314–324 (DESEGEEVDED) show a composition bias toward acidic residues.

Belongs to the PUR DNA-binding protein family. Homodimer, heterodimer with PURA and heterotrimer with PURA and YBX1/Y-box protein 1. Interacts with MYOCD and SRF.

The protein resides in the nucleus. Transcriptional regulator which can act as an activator or a repressor. Represses the transcription of ACTA2 in fibroblasts and smooth muscle cells via its ability to interact with the purine-rich strand of a MCAT-containing element in the 5' flanking region of the gene. Represses the transcription of MYOCD, capable of repressing all isoforms of MYOCD but the magnitude of the repressive effects is most notable for the SMC-specific isoforms. Promotes hepatic glucose production by activating the transcription of ADCY6, leading to cAMP accumulation, increased PKA activity, CREB activation, and increased transcription of PCK1 and G6PC genes. Has capacity to bind repeated elements in single-stranded DNA such as the purine-rich single strand of the PUR element located upstream of the MYC gene. Participates in transcriptional and translational regulation of alpha-MHC expression in cardiac myocytes by binding to the purine-rich negative regulatory (PNR) element. Modulates constitutive liver galectin-3 gene transcription by binding to its promoter. May play a role in the dendritic transport of a subset of mRNAs. The chain is Transcriptional regulator protein Pur-beta (Purb) from Mus musculus (Mouse).